The primary structure comprises 94 residues: Large ribosomal subunit protein eL42 (94 aa).

Zn(2+) is bound by residues cysteine 11, cysteine 14, cysteine 71, and cysteine 74. A C4-type zinc finger spans residues 11 to 74; the sequence is CPFCKKHTIH…LDLRFRCTEC (64 aa).

This sequence belongs to the eukaryotic ribosomal protein eL42 family. In terms of assembly, part of the 50S ribosomal subunit. It depends on Zn(2+) as a cofactor.

In terms of biological role, binds to the 23S rRNA. The chain is Large ribosomal subunit protein eL42 from Pyrococcus furiosus (strain ATCC 43587 / DSM 3638 / JCM 8422 / Vc1).